We begin with the raw amino-acid sequence, 133 residues long: Protein Wnt-4 (133 aa).

Ser-1 is lipidated: O-palmitoleoyl serine; by PORCN. Disulfide bonds link Cys-69–Cys-114 and Cys-99–Cys-109. N-linked (GlcNAc...) asparagine glycosylation occurs at Asn-100.

This sequence belongs to the Wnt family. In terms of processing, palmitoleoylation is required for efficient binding to frizzled receptors. Depalmitoleoylation leads to Wnt signaling pathway inhibition.

The protein localises to the secreted. The protein resides in the extracellular space. It is found in the extracellular matrix. In terms of biological role, ligand for members of the frizzled family of seven transmembrane receptors. Plays an important role in embryonic development. This chain is Protein Wnt-4 (WNT-4), found in Strongylocentrotus purpuratus (Purple sea urchin).